Consider the following 86-residue polypeptide: MSKICQITGKKAMIGNNVSHSKRRTKRTFDVNLFTKKFYYVEQDCWISLNICANGLRVINKKGLDAALNEAVTKGYCDWKSIKIIG.

The protein belongs to the bacterial ribosomal protein bL28 family.

This Phocaeicola vulgatus (strain ATCC 8482 / DSM 1447 / JCM 5826 / CCUG 4940 / NBRC 14291 / NCTC 11154) (Bacteroides vulgatus) protein is Large ribosomal subunit protein bL28.